The sequence spans 363 residues: MKIGVFVPIGNNGWLISTTAPQYMPTFELNKAIVQKAEHYHFDFALSMIKLRGFGGKTEFWDHNLESFTLMAGLAAVTSRIQIYATAATLTLPPAIVARMASTIDSISGGRFGVNLVTGWQKPEYDQMGLWPGDEYFSRRYEYLTEYVQVLRDLWGTGKSDFKGDYFTMNDCRVSPQPSAPMKVICAGQSDAGMAFSAKYADFNFCFGKGVNTPAAFAPTAARMKEAADKTGRDVGSYVLFMVIADETDEAARAKWERYKDGADDEALSWLTEQSQKDTRSGADTNVRQMADPTSAVNINMGTLVGSYASVARMLDEVAAVPGAEGVLLTFDDFLTGVETFGERIQPLMQCRAHIPAITKEVA.

Residues 49–50 (IK), N115, E124, 140–141 (RY), and S190 each bind FMN.

Belongs to the NtaA/SnaA/DszA monooxygenase family. RutA subfamily.

It catalyses the reaction uracil + FMNH2 + NADH + O2 = (Z)-3-ureidoacrylate + FMN + NAD(+) + H2O + H(+). The catalysed reaction is thymine + FMNH2 + NADH + O2 = (Z)-2-methylureidoacrylate + FMN + NAD(+) + H2O + H(+). Its function is as follows. Catalyzes the pyrimidine ring opening between N-3 and C-4 by an unusual flavin hydroperoxide-catalyzed mechanism, adding oxygen atoms in the process to yield ureidoacrylate peracid, that immediately reacts with FMN forming ureidoacrylate and FMN-N(5)-oxide. The FMN-N(5)-oxide reacts spontaneously with NADH to produce FMN. Requires the flavin reductase RutF to regenerate FMN in vivo. The polypeptide is Pyrimidine monooxygenase RutA (Enterobacter cloacae subsp. cloacae (strain ATCC 13047 / DSM 30054 / NBRC 13535 / NCTC 10005 / WDCM 00083 / NCDC 279-56)).